The primary structure comprises 158 residues: NAD(P)H-quinone oxidoreductase subunit N (158 aa).

It belongs to the complex I NdhN subunit family. NDH-1 can be composed of about 15 different subunits; different subcomplexes with different compositions have been identified which probably have different functions.

The protein localises to the cellular thylakoid membrane. It catalyses the reaction a plastoquinone + NADH + (n+1) H(+)(in) = a plastoquinol + NAD(+) + n H(+)(out). It carries out the reaction a plastoquinone + NADPH + (n+1) H(+)(in) = a plastoquinol + NADP(+) + n H(+)(out). Its function is as follows. NDH-1 shuttles electrons from an unknown electron donor, via FMN and iron-sulfur (Fe-S) centers, to quinones in the respiratory and/or the photosynthetic chain. The immediate electron acceptor for the enzyme in this species is believed to be plastoquinone. Couples the redox reaction to proton translocation, and thus conserves the redox energy in a proton gradient. Cyanobacterial NDH-1 also plays a role in inorganic carbon-concentration. The protein is NAD(P)H-quinone oxidoreductase subunit N of Prochlorococcus marinus (strain MIT 9312).